We begin with the raw amino-acid sequence, 296 residues long: Peptide transport system permease protein SapC (296 aa).

Residues 1 to 28 (MPYDSVYSEKRPPGTLRTAWRKFYSDAP) lie on the Cytoplasmic side of the membrane. The chain crosses the membrane as a helical span at residues 29–49 (AMVGLYGCAGLALLCIFGGWI). The Periplasmic segment spans residues 50–98 (APYGIDQQFLGYQLLPPSWSRYGEVSFFLGTDDLGRDVLSRLLSGAAPT). The helical transmembrane segment at 99-119 (VGGAFIVTLAATLCGLVLGVV) threads the bilayer. An ABC transmembrane type-1 domain is found at 99–284 (VGGAFIVTLA…LSVLLVNLLG (186 aa)). At 120-133 (AGATHGLRSAVLNH) the chain is on the cytoplasmic side. A helical membrane pass occupies residues 134-154 (ILDTLLSIPSLLLAIIVVAFA). The Periplasmic segment spans residues 155-196 (GPHLSHAMFAVWLALLPRMVRSVYSMVHDELEKEYVIAARLD). Residues 197–217 (GATTLNILWFAILPNITAGLV) traverse the membrane as a helical segment. The Cytoplasmic portion of the chain corresponds to 218–222 (TEITR). A helical transmembrane segment spans residues 223-243 (ALSMAILDIAALGFLDLGAQL). Residues 244-257 (PSPEWGAMLGDALE) lie on the Periplasmic side of the membrane. A helical membrane pass occupies residues 258–278 (LIYVAPWTVMLPGAAITLSVL). At 279–296 (LVNLLGDGIRRAIIAGVE) the chain is on the cytoplasmic side.

This sequence belongs to the binding-protein-dependent transport system permease family. OppBC subfamily.

It is found in the cell inner membrane. Its function is as follows. Involved in a peptide intake transport system that plays a role in the resistance to antimicrobial peptides. The polypeptide is Peptide transport system permease protein SapC (sapC) (Salmonella typhi).